Consider the following 330-residue polypeptide: Geranylgeranyl diphosphate synthase (330 aa).

Lysine 43, arginine 46, and histidine 75 together coordinate isopentenyl diphosphate. Residues aspartate 82 and aspartate 86 each coordinate Mg(2+). Arginine 91 provides a ligand contact to an all-trans-polyprenyl diphosphate. Arginine 92 is a binding site for isopentenyl diphosphate. An all-trans-polyprenyl diphosphate is bound by residues lysine 175, threonine 176, glutamine 213, lysine 230, and lysine 240.

Belongs to the FPP/GGPP synthase family. Mg(2+) serves as cofactor.

The enzyme catalyses isopentenyl diphosphate + (2E,6E)-farnesyl diphosphate = (2E,6E,10E)-geranylgeranyl diphosphate + diphosphate. It participates in isoprenoid biosynthesis; geranylgeranyl diphosphate biosynthesis; geranylgeranyl diphosphate from farnesyl diphosphate and isopentenyl diphosphate: step 1/1. In terms of biological role, catalyzes the condensation of isopentenyl pyrophosphate with the allylic pyrophosphates to yield geranylgeranyl diphosphate (GGPP) which is a precursor of the ether-linked lipids. It is able to use dimethylallyl diphosphate (DMAPP), geranyl diphosphate (GPP), and (all-E)-geranyl diphosphate (E-FPP) as an allylic substrate. This Sulfolobus acidocaldarius (strain ATCC 33909 / DSM 639 / JCM 8929 / NBRC 15157 / NCIMB 11770) protein is Geranylgeranyl diphosphate synthase (gds).